Here is a 361-residue protein sequence, read N- to C-terminus: Pseudouridine-5'-phosphate glycosidase (361 aa).

The active-site Proton donor is Glu-27. Substrate-binding residues include Lys-88 and Val-108. Mn(2+) is bound at residue Asp-140. 142 to 144 (SAD) provides a ligand contact to substrate. Lys-161 (nucleophile) is an active-site residue. The disordered stretch occupies residues 306-361 (DRSPTDPAAPDPTAPDPAAPDPTAPDPAAPDSAAPDLAGPDPSAPDPAAVARAHRP). Positions 312–333 (PAAPDPTAPDPAAPDPTAPDPA) are enriched in pro residues. Positions 334–354 (APDSAAPDLAGPDPSAPDPAA) are enriched in low complexity.

Belongs to the pseudouridine-5'-phosphate glycosidase family. Homotrimer. Mn(2+) serves as cofactor.

The enzyme catalyses D-ribose 5-phosphate + uracil = psi-UMP + H2O. Catalyzes the reversible cleavage of pseudouridine 5'-phosphate (PsiMP) to ribose 5-phosphate and uracil. Functions biologically in the cleavage direction, as part of a pseudouridine degradation pathway. The protein is Pseudouridine-5'-phosphate glycosidase of Frankia alni (strain DSM 45986 / CECT 9034 / ACN14a).